The chain runs to 208 residues: MTLQTFQSADFAVFSVDGLERRMNAIKTHIQPKLETLGERFSHYLSDQTGEPFFYHVAKHARRKVNPPNDTWVAFSTNKRGYKMLPHFQIGLWGTHAFIYFGLIYECPQKEVAAHALLEHLNDLKTNIPNDFVWSIDHTKPDVLPHNTLEAKDLQKIIERLATVKKAELLVGIHIAPEEFSSMTNEQFQTKIESTIHSLLPLYNICNR.

The protein belongs to the UPF0637 family.

The chain is UPF0637 protein Bcer98_2662 from Bacillus cytotoxicus (strain DSM 22905 / CIP 110041 / 391-98 / NVH 391-98).